The chain runs to 357 residues: Phosphoribosylformylglycinamidine cyclo-ligase (357 aa).

It belongs to the AIR synthase family.

The protein localises to the cytoplasm. The catalysed reaction is 2-formamido-N(1)-(5-O-phospho-beta-D-ribosyl)acetamidine + ATP = 5-amino-1-(5-phospho-beta-D-ribosyl)imidazole + ADP + phosphate + H(+). The protein operates within purine metabolism; IMP biosynthesis via de novo pathway; 5-amino-1-(5-phospho-D-ribosyl)imidazole from N(2)-formyl-N(1)-(5-phospho-D-ribosyl)glycinamide: step 2/2. The chain is Phosphoribosylformylglycinamidine cyclo-ligase from Rhizobium rhizogenes (strain K84 / ATCC BAA-868) (Agrobacterium radiobacter).